A 414-amino-acid polypeptide reads, in one-letter code: Phospholipid-transporting ATPase accessory subunit LEM3 (414 aa).

A required for localization to the plasma membrane region spans residues 1–50; the sequence is MVNFDLGQVGEVFRRKDKGAIVSGDNPEEEEDVDASEFEEDEVKPVRTKN. Residues 1–74 are Cytoplasmic-facing; the sequence is MVNFDLGQVG…AINPVLTPRT (74 aa). The interval 20-52 is disordered; that stretch reads AIVSGDNPEEEEDVDASEFEEDEVKPVRTKNRR. The span at 26–42 shows a compositional bias: acidic residues; sequence NPEEEEDVDASEFEEDE. Serine 36 carries the post-translational modification Phosphoserine. Residues 75-95 traverse the membrane as a helical segment; it reads VLPLYLLIAVVFVIVGGCILA. Residues 96–372 lie on the Extracellular side of the membrane; that stretch reads QNSKVDEVTI…HGSHLGGRNP (277 aa). Disulfide bonds link cysteine 110/cysteine 159 and cysteine 216/cysteine 231. N-linked (GlcNAc...) asparagine glycosylation occurs at asparagine 113. N-linked (GlcNAc...) asparagine glycosylation is found at asparagine 240, asparagine 256, asparagine 279, asparagine 298, and asparagine 332. Residues 373-393 traverse the membrane as a helical segment; that stretch reads FLGIVYLIGGCICAAMALILL. The Cytoplasmic portion of the chain corresponds to 394–414; sequence TFWLFGGRKIADASSLSWNMK. The interval 400 to 414 is required for localization to the plasma membrane; the sequence is GRKIADASSLSWNMK.

The protein belongs to the CDC50/LEM3 family. In terms of assembly, component of a flippase complex consisting of DNF1 or DNF2 and LEM3. Interacts with DNF1; the interaction is direct and required for their mutual export from the endoplasmic reticulum. Interacts with DNF2; the interaction is direct and required for their mutual export from the endoplasmic reticulum.

The protein localises to the cell membrane. Its function is as follows. Accessory component of a P4-ATPase flippase complex which catalyzes the hydrolysis of ATP coupled to the transport of glucosylceramide, phosphatidylcholine, phosphatidylethanolamine, and small amounts of phosphatidylserine from the lumenal to the cytosolic leaflet of the cell membrane and ensures the maintenance of asymmetric distribution of phospholipids. Contributes to substrate binding and specificity of the P4-ATPase catalytic subunit. The sequence is that of Phospholipid-transporting ATPase accessory subunit LEM3 from Saccharomyces cerevisiae (strain ATCC 204508 / S288c) (Baker's yeast).